The following is a 355-amino-acid chain: UDP-N-acetylglucosamine--N-acetylmuramyl-(pentapeptide) pyrophosphoryl-undecaprenol N-acetylglucosamine transferase (355 aa).

UDP-N-acetyl-alpha-D-glucosamine is bound by residues 15–17 (TGG), Asn-127, Arg-163, Ser-191, Ile-244, 263–268 (ALTVSE), and Gln-288.

The protein belongs to the glycosyltransferase 28 family. MurG subfamily.

It localises to the cell inner membrane. The catalysed reaction is di-trans,octa-cis-undecaprenyl diphospho-N-acetyl-alpha-D-muramoyl-L-alanyl-D-glutamyl-meso-2,6-diaminopimeloyl-D-alanyl-D-alanine + UDP-N-acetyl-alpha-D-glucosamine = di-trans,octa-cis-undecaprenyl diphospho-[N-acetyl-alpha-D-glucosaminyl-(1-&gt;4)]-N-acetyl-alpha-D-muramoyl-L-alanyl-D-glutamyl-meso-2,6-diaminopimeloyl-D-alanyl-D-alanine + UDP + H(+). The protein operates within cell wall biogenesis; peptidoglycan biosynthesis. Cell wall formation. Catalyzes the transfer of a GlcNAc subunit on undecaprenyl-pyrophosphoryl-MurNAc-pentapeptide (lipid intermediate I) to form undecaprenyl-pyrophosphoryl-MurNAc-(pentapeptide)GlcNAc (lipid intermediate II). The protein is UDP-N-acetylglucosamine--N-acetylmuramyl-(pentapeptide) pyrophosphoryl-undecaprenol N-acetylglucosamine transferase of Sodalis glossinidius (strain morsitans).